Here is a 277-residue protein sequence, read N- to C-terminus: Undecaprenyl-diphosphatase 1 (277 aa).

Helical transmembrane passes span 46–66, 95–115, 119–139, 165–185, 191–211, 216–236, and 256–276; these read VVGF…VYFF, WWVI…KSLI, LASL…MWAA, ILAL…TALI, VAAT…AGLY, ALGT…SFVV, and FVIY…TGVL.

Belongs to the UppP family.

It localises to the cell membrane. The enzyme catalyses di-trans,octa-cis-undecaprenyl diphosphate + H2O = di-trans,octa-cis-undecaprenyl phosphate + phosphate + H(+). Functionally, catalyzes the dephosphorylation of undecaprenyl diphosphate (UPP). Confers resistance to bacitracin. In Streptomyces avermitilis (strain ATCC 31267 / DSM 46492 / JCM 5070 / NBRC 14893 / NCIMB 12804 / NRRL 8165 / MA-4680), this protein is Undecaprenyl-diphosphatase 1.